The following is a 493-amino-acid chain: Cysteine sulfinic acid decarboxylase (493 aa).

Lys305 is subject to N6-(pyridoxal phosphate)lysine.

This sequence belongs to the group II decarboxylase family. Homodimer. Pyridoxal 5'-phosphate serves as cofactor. Expressed in liver and brain. Also expressed in both astrocytes and neurons, but lower levels are expressed in astrocytes.

It catalyses the reaction L-aspartate + H(+) = beta-alanine + CO2. The enzyme catalyses 3-sulfino-L-alanine + H(+) = hypotaurine + CO2. It carries out the reaction L-cysteate + H(+) = taurine + CO2. It participates in organosulfur biosynthesis; taurine biosynthesis; hypotaurine from L-cysteine: step 2/2. Functionally, catalyzes the decarboxylation of L-aspartate, 3-sulfino-L-alanine (cysteine sulfinic acid), and L-cysteate to beta-alanine, hypotaurine and taurine, respectively. The preferred substrate is 3-sulfino-L-alanine. Does not exhibit any decarboxylation activity toward glutamate. This Homo sapiens (Human) protein is Cysteine sulfinic acid decarboxylase (CSAD).